The primary structure comprises 910 residues: Protein translocase subunit SecA (910 aa).

Residues Q87, 105 to 109, and D512 contribute to the ATP site; that span reads GEGKT. Composition is skewed to basic and acidic residues over residues 561–571, 841–853, and 880–890; these read RHESRRIDNQL, EEERRQQAEELAR, and TFEREARKVGR. Disordered stretches follow at residues 561-584 and 835-910; these read RHESRRIDNQLRGRSGRQGDAGSS and EEVD…GKIN. C894, C896, C905, and H906 together coordinate Zn(2+). Over residues 900–910 the composition is skewed to basic residues; it reads KKYKQCHGKIN.

It belongs to the SecA family. In terms of assembly, monomer and homodimer. Part of the essential Sec protein translocation apparatus which comprises SecA, SecYEG and auxiliary proteins SecDF-YajC and YidC. Requires Zn(2+) as cofactor.

It is found in the cell inner membrane. The protein localises to the cytoplasm. The catalysed reaction is ATP + H2O + cellular proteinSide 1 = ADP + phosphate + cellular proteinSide 2.. Part of the Sec protein translocase complex. Interacts with the SecYEG preprotein conducting channel. Has a central role in coupling the hydrolysis of ATP to the transfer of proteins into and across the cell membrane, serving both as a receptor for the preprotein-SecB complex and as an ATP-driven molecular motor driving the stepwise translocation of polypeptide chains across the membrane. This is Protein translocase subunit SecA from Photobacterium profundum (strain SS9).